Here is a 172-residue protein sequence, read N- to C-terminus: Ribosome maturation factor RimM (172 aa).

Positions Asp-96 to Leu-168 constitute a PRC barrel domain.

It belongs to the RimM family. As to quaternary structure, binds ribosomal protein uS19.

It is found in the cytoplasm. An accessory protein needed during the final step in the assembly of 30S ribosomal subunit, possibly for assembly of the head region. Essential for efficient processing of 16S rRNA. May be needed both before and after RbfA during the maturation of 16S rRNA. It has affinity for free ribosomal 30S subunits but not for 70S ribosomes. The protein is Ribosome maturation factor RimM of Streptococcus agalactiae serotype Ia (strain ATCC 27591 / A909 / CDC SS700).